The chain runs to 238 residues: Small ribosomal subunit protein eS4 (238 aa).

The region spanning 38 to 110 (LPLAIIIRDV…EKKYYALIPI (73 aa)) is the S4 RNA-binding domain.

Belongs to the eukaryotic ribosomal protein eS4 family.

This Pyrobaculum islandicum (strain DSM 4184 / JCM 9189 / GEO3) protein is Small ribosomal subunit protein eS4.